Reading from the N-terminus, the 353-residue chain is Anthranilate phosphoribosyltransferase (353 aa).

Residues Gly86, Gly89–Asp90, Asn96–Thr99, Lys114–Gly122, and Ser126 each bind 5-phospho-alpha-D-ribose 1-diphosphate. Gly86 contacts anthranilate. Ser98 serves as a coordination point for Mg(2+). Asn117 lines the anthranilate pocket. Arg172 lines the anthranilate pocket. Mg(2+) is bound by residues Asp231 and Glu232.

It belongs to the anthranilate phosphoribosyltransferase family. Homodimer. Mg(2+) is required as a cofactor.

It catalyses the reaction N-(5-phospho-beta-D-ribosyl)anthranilate + diphosphate = 5-phospho-alpha-D-ribose 1-diphosphate + anthranilate. Its pathway is amino-acid biosynthesis; L-tryptophan biosynthesis; L-tryptophan from chorismate: step 2/5. In terms of biological role, catalyzes the transfer of the phosphoribosyl group of 5-phosphorylribose-1-pyrophosphate (PRPP) to anthranilate to yield N-(5'-phosphoribosyl)-anthranilate (PRA). This chain is Anthranilate phosphoribosyltransferase, found in Pseudomonas syringae pv. syringae (strain B728a).